A 21-amino-acid chain; its full sequence is Trypsin (21 aa).

A propeptide spans 1-7 (activation peptide); it reads FPIEEDK. The Peptidase S1 domain maps to 8 to 21; the sequence is IVGGYECPKHXVPW.

Belongs to the peptidase S1 family.

The protein resides in the secreted. Its subcellular location is the extracellular space. The enzyme catalyses Preferential cleavage: Arg-|-Xaa, Lys-|-Xaa.. The polypeptide is Trypsin (Protopterus aethiopicus (Marbled lungfish)).